The primary structure comprises 424 residues: Adenylosuccinate synthetase (424 aa).

GTP contacts are provided by residues 12 to 18 and 40 to 42; these read GDEGKGK and GHT. Asp-13 functions as the Proton acceptor in the catalytic mechanism. Asp-13 and Gly-40 together coordinate Mg(2+). Residues 13-16, 38-41, Thr-130, Arg-144, Asn-220, Thr-235, and Arg-299 contribute to the IMP site; these read DEGK and NAGH. His-41 functions as the Proton donor in the catalytic mechanism. 295–301 contacts substrate; sequence VTTGRRR. GTP-binding positions include Arg-301, 327 to 329, and 412 to 414; these read KLD and GTG.

It belongs to the adenylosuccinate synthetase family. In terms of assembly, homodimer. Mg(2+) serves as cofactor.

It localises to the cytoplasm. The enzyme catalyses IMP + L-aspartate + GTP = N(6)-(1,2-dicarboxyethyl)-AMP + GDP + phosphate + 2 H(+). It participates in purine metabolism; AMP biosynthesis via de novo pathway; AMP from IMP: step 1/2. Plays an important role in the de novo pathway and in the salvage pathway of purine nucleotide biosynthesis. Catalyzes the first committed step in the biosynthesis of AMP from IMP. The chain is Adenylosuccinate synthetase from Aspergillus fumigatus (strain CBS 144.89 / FGSC A1163 / CEA10) (Neosartorya fumigata).